Here is a 907-residue protein sequence, read N- to C-terminus: Androgen receptor (907 aa).

Residues Met-1–Lys-545 form a modulating region. An interaction with ZNF318 region spans residues Met-1–Ala-574. Disordered regions lie at residues Asn-36 to Leu-152 and Gln-200 to Gly-231. Residues Gln-55–Gln-76 are compositionally biased toward low complexity. Residue Ser-67 is modified to Phosphoserine; by CDK9. Ser-81 carries the post-translational modification Phosphoserine. A compositionally biased stretch (polar residues) spans Thr-123–Gln-134. Low complexity predominate over residues Gln-200–Ser-224. Tyr-228 bears the Phosphotyrosine; by CSK mark. Ser-261 bears the Phosphoserine mark. At Tyr-272 the chain carries Phosphotyrosine; by CSK and TNK2. A phosphotyrosine; by CSK mark is found at Tyr-310, Tyr-349, Tyr-360, and Tyr-365. Tyr-366 is subject to Phosphotyrosine; by CSK and TNK2. Lys-389 participates in a covalent cross-link: Glycyl lysine isopeptide (Lys-Gly) (interchain with G-Cter in SUMO). Tyr-396 bears the Phosphotyrosine; by CSK mark. Lys-508 participates in a covalent cross-link: Glycyl lysine isopeptide (Lys-Gly) (interchain with G-Cter in SUMO). Phosphotyrosine; by CSK occurs at positions 522 and 539. The interaction with LPXN stretch occupies residues Tyr-539–Thr-906. A DNA-binding region (nuclear receptor) is located at residues Thr-546–Leu-619. 2 consecutive NR C4-type zinc fingers follow at residues Cys-547–Cys-567 and Cys-583–Cys-607. Residues Tyr-559–Val-649 form an interaction with HIPK3 region. An interaction with CCAR1 region spans residues Gln-579–Thr-906. The interval Met-612–Thr-906 is interaction with KAT7. Ser-638 is subject to Phosphoserine; by STK4/MST1. The 232-residue stretch at Glu-656–Ile-887 folds into the NR LBD domain. 2 residues coordinate 17beta-hydroxy-5alpha-androstan-3-one: Asn-693 and Arg-740. Glycyl lysine isopeptide (Lys-Gly) (interchain with G-Cter in ubiquitin) cross-links involve residues Lys-833 and Lys-835. Thr-865 lines the 17beta-hydroxy-5alpha-androstan-3-one pocket. At Tyr-903 the chain carries Phosphotyrosine; by CSK.

Belongs to the nuclear hormone receptor family. NR3 subfamily. Binds DNA as a homodimer. Part of a ternary complex containing AR, EFCAB6/DJBP and PARK7. Interacts with HIPK3 and NR0B2 in the presence of androgen. The ligand binding domain interacts with KAT7/HBO1 in the presence of dihydrotestosterone. Interacts with EFCAB6/DJBP, PQBP1, RANBP9, RBAK, SPDEF, SRA1, TGFB1I1 and RREB1. Interacts with ZMIZ1/ZIMP10 and ZMIZ2/ZMIP7 which both enhance its transactivation activity. Interacts with SLC30A9 and RAD54L2/ARIP4. Interacts with MACROD1 (via macro domain). Interacts via the ligand-binding domain with LXXLL and FXXLF motifs from NCOA1, NCOA2, NCOA3 and MAGEA11. Interacts (via nuclear receptor DNA binding domain and nuclear receptor ligand binding domain) with NCOA4. The AR N-terminal poly-Gln region binds Ran resulting in enhancement of AR-mediated transactivation. Ran-binding decreases as the poly-Gln length increases. Interacts with HIP1 (via coiled coil domain). Interacts (via ligand-binding domain) with TRIM68. Interacts with TNK2. Interacts with USP26. Interacts with RNF6. Interacts (regulated by RNF6 probably through polyubiquitination) with RNF14; regulates AR transcriptional activity. Interacts with PRMT2 and TRIM24. Interacts with RACK1. Interacts with RANBP10; this interaction enhances dihydrotestosterone-induced AR transcriptional activity. Interacts with PRPF6 in a hormone-independent way; this interaction enhances dihydrotestosterone-induced AR transcriptional activity. Interacts with STK4/MST1. Interacts with ZIPK/DAPK3. Interacts with LPXN. Interacts with MAK. Part of a complex containing AR, MAK and NCOA3. Interacts with CRY1. Interacts with CCAR1 and GATA2. Interacts with ZNF318. Interacts with BUD31. Interacts with ARID4A. Interacts with ARID4B. Interacts (via NR LBD domain) with ZBTB7A; the interaction is direct and androgen-dependent. Interacts with NCOR1. Interacts with NCOR2. Interacts witH CRY2 in a ligand-dependent manner. Post-translationally, phosphorylated in prostate cancer cells in response to several growth factors including EGF. Phosphorylation is induced by c-Src kinase (CSK). Tyr-522 is one of the major phosphorylation sites and an increase in phosphorylation and Src kinase activity is associated with prostate cancer progression. Phosphorylation by TNK2 enhances the DNA-binding and transcriptional activity. Phosphorylation at Ser-67 by CDK9 regulates AR promoter selectivity and cell growth. Sumoylated on Lys-389 (major) and Lys-508. Ubiquitinated. Deubiquitinated by USP26. 'Lys-6' and 'Lys-27'-linked polyubiquitination by RNF6 modulates AR transcriptional activity and specificity. In terms of processing, palmitoylated by ZDHHC7 and ZDHHC21. Palmitoylation is required for plasma membrane targeting and for rapid intracellular signaling via ERK and AKT kinases and cAMP generation.

The protein localises to the nucleus. Its subcellular location is the cytoplasm. Its function is as follows. Steroid hormone receptors are ligand-activated transcription factors that regulate eukaryotic gene expression and affect cellular proliferation and differentiation in target tissues. Transcription factor activity is modulated by bound coactivator and corepressor proteins like ZBTB7A that recruits NCOR1 and NCOR2 to the androgen response elements/ARE on target genes, negatively regulating androgen receptor signaling and androgen-induced cell proliferation. Transcription activation is also down-regulated by NR0B2. Activated, but not phosphorylated, by HIPK3 and ZIPK/DAPK3. This chain is Androgen receptor (AR), found in Canis lupus familiaris (Dog).